The following is a 603-amino-acid chain: Sulfoacetaldehyde acetyltransferase (603 aa).

It belongs to the TPP enzyme family. In terms of assembly, homodimer or homotetramer. Mg(2+) serves as cofactor. Requires thiamine diphosphate as cofactor.

It localises to the cytoplasm. The enzyme catalyses acetyl phosphate + sulfite + H(+) = sulfoacetaldehyde + phosphate. Its pathway is organosulfur degradation; taurine degradation via aerobic pathway; acetyl phosphate and sulfite from taurine: step 2/2. The sequence is that of Sulfoacetaldehyde acetyltransferase (xsc) from Alcaligenes xylosoxydans xylosoxydans (Achromobacter xylosoxidans).